A 384-amino-acid chain; its full sequence is BarH-like 2 homeobox protein (384 aa).

Disordered stretches follow at residues 1-134, 154-237, and 364-384; these read MTAM…APRT, CAPY…TAFS, and PGGQPALNPLSNPIPGTPHPR. Residues 119–134 show a composition bias toward low complexity; the sequence is QSAAQQLGSAAAAPRT. A compositionally biased stretch (basic and acidic residues) spans 177-217; sequence ESFRPKLEQEDSKTKLDKREDSQSDIKCHGTKEEGDREITS. Residues 229–288 constitute a DNA-binding region (homeobox); that stretch reads PRKARTAFSDHQLNQLERSFERQKYLSVQDRMDLAAALNLTDTQVKTWYQNRRTKWKRQT.

It belongs to the BAR homeobox family. In terms of tissue distribution, expressed in the ganglion cell layer of the retina in the eye and in the ventral zone of the dorsal thalamus of the CNS.

It localises to the nucleus. Functionally, potential regulator of neural basic helix-loop-helix genes. It may down-regulate expression of ASCL1 and, within the thalamus, up-regulate NGN2, thereby regulating distinct patterns of neuronal differentiation. The chain is BarH-like 2 homeobox protein (Barhl2) from Rattus norvegicus (Rat).